Consider the following 121-residue polypeptide: Dihydroneopterin aldolase (121 aa).

Substrate contacts are provided by residues glutamate 22, tyrosine 54, and 73–74 (LE). Catalysis depends on lysine 100, which acts as the Proton donor/acceptor.

It belongs to the DHNA family. In terms of assembly, homooctamer. Four molecules assemble into a ring, and two rings come together to give a cylinder with a hole of at least 13 a diameter.

It carries out the reaction 7,8-dihydroneopterin = 6-hydroxymethyl-7,8-dihydropterin + glycolaldehyde. The enzyme catalyses 7,8-dihydroneopterin = 7,8-dihydromonapterin. The protein operates within cofactor biosynthesis; tetrahydrofolate biosynthesis; 2-amino-4-hydroxy-6-hydroxymethyl-7,8-dihydropteridine diphosphate from 7,8-dihydroneopterin triphosphate: step 3/4. Catalyzes the conversion of 7,8-dihydroneopterin to 6-hydroxymethyl-7,8-dihydropterin. Can also catalyze the epimerization of carbon 2' of dihydroneopterin to dihydromonapterin. The polypeptide is Dihydroneopterin aldolase (folB) (Staphylococcus aureus (strain COL)).